A 376-amino-acid chain; its full sequence is 3-aminomethylindole N-methyltransferase (376 aa).

Positions 220, 243, 263, and 264 each coordinate S-adenosyl-L-homocysteine.

Belongs to the class I-like SAM-binding methyltransferase superfamily. Cation-independent O-methyltransferase family. In terms of tissue distribution, more present in the fifth leaf than in the second leaf (at protein level).

It catalyses the reaction 3-(aminomethyl)indole + 2 S-adenosyl-L-methionine = gramine + 2 S-adenosyl-L-homocysteine + 2 H(+). The protein operates within alkaloid biosynthesis. Its activity is regulated as follows. Repressed by sodium carbonate, sodium bicarbonate and K-phosphate. Methylates 3-aminomethylindole (AMI) and N-methyl-3-aminomethylindole (MAMI), two substrates involved in gramine biosynthesis, a toxic indole alkaloid. Can use S-adenosyl-L-methionine (AdoMet) as a methyl donor. Unable to mediate caffeic acid O-methylation. The chain is 3-aminomethylindole N-methyltransferase from Hordeum vulgare subsp. vulgare (Domesticated barley).